We begin with the raw amino-acid sequence, 144 residues long: Granulocyte-macrophage colony-stimulating factor (144 aa).

The N-terminal stretch at 1–17 is a signal peptide; that stretch reads MWLQNLLLLGTVVCSFS. Ser-24 carries an O-linked (GalNAc...) serine glycan. Thr-27 carries an O-linked (GalNAc...) threonine glycan. 2 N-linked (GlcNAc...) asparagine glycosylation sites follow: Asn-44 and Asn-54. Disulfide bonds link Cys-71/Cys-113 and Cys-105/Cys-138.

The protein belongs to the GM-CSF family. In terms of assembly, monomer. The signaling GM-CSF receptor complex is a dodecamer of two head-to-head hexamers of two alpha, two beta, and two ligand subunits.

The protein resides in the secreted. In terms of biological role, cytokine that stimulates the growth and differentiation of hematopoietic precursor cells from various lineages, including granulocytes, macrophages, eosinophils and erythrocytes. This is Granulocyte-macrophage colony-stimulating factor (CSF2) from Cervus elaphus (Red deer).